We begin with the raw amino-acid sequence, 693 residues long: Golgin subfamily A member 6A (693 aa).

A coiled-coil region spans residues 14–611 (LEESRQNKLA…KLLELQELVL (598 aa)). Disordered stretches follow at residues 20–69 (NKLA…PGDS), 497–547 (LPGE…GTEQ), and 661–693 (NVEPAPGAAREGSPHDNPTVQQIVQLSPVMQDT). Over residues 54 to 69 (SPETTTSGGCHSPGDS) the composition is skewed to polar residues. Basic and acidic residues predominate over residues 537 to 547 (LPKEKADGTEQ). The span at 676-693 (DNPTVQQIVQLSPVMQDT) shows a compositional bias: polar residues.

The protein belongs to the GOLGA6 family. As to expression, highly expressed in seminiferous tubes in testis. Highly expressed in spermatids, barely detectable in late pachytene spermatocytes, and not detectable in spermatogonia. Detected at intermediate levels in pancreas and lymph nodes, and at much lower levels in spleen, peripheral blood leukocytes, skeletal muscle, liver, lung, placenta, brain and heart.

The protein is Golgin subfamily A member 6A (GOLGA6A) of Homo sapiens (Human).